The sequence spans 351 residues: UDP-3-O-acylglucosamine N-acyltransferase (351 aa).

The Proton acceptor role is filled by histidine 240.

This sequence belongs to the transferase hexapeptide repeat family. LpxD subfamily. As to quaternary structure, homotrimer.

It catalyses the reaction a UDP-3-O-[(3R)-3-hydroxyacyl]-alpha-D-glucosamine + a (3R)-hydroxyacyl-[ACP] = a UDP-2-N,3-O-bis[(3R)-3-hydroxyacyl]-alpha-D-glucosamine + holo-[ACP] + H(+). The protein operates within bacterial outer membrane biogenesis; LPS lipid A biosynthesis. In terms of biological role, catalyzes the N-acylation of UDP-3-O-acylglucosamine using 3-hydroxyacyl-ACP as the acyl donor. Is involved in the biosynthesis of lipid A, a phosphorylated glycolipid that anchors the lipopolysaccharide to the outer membrane of the cell. This Pseudomonas syringae pv. syringae (strain B728a) protein is UDP-3-O-acylglucosamine N-acyltransferase.